Consider the following 493-residue polypeptide: N-acetylglucosamine kinase 1 (493 aa).

The Hexokinase domain occupies E27–A490. The tract at residues T79 to L221 is hexokinase small subdomain. The tract at residues N222–N479 is hexokinase large subdomain.

It belongs to the hexokinase family. In terms of assembly, interacts with histone deacetylase SIR2 under filamentation-inducing conditions.

It is found in the cytoplasm. It localises to the nucleus. Its subcellular location is the mitochondrion. It carries out the reaction N-acetyl-D-glucosamine + ATP = N-acetyl-D-glucosamine 6-phosphate + ADP + H(+). It catalyses the reaction D-mannose + ATP = D-mannose 6-phosphate + ADP + H(+). The enzyme catalyses D-glucose + ATP = D-glucose 6-phosphate + ADP + H(+). The catalysed reaction is D-glucosamine + ATP = D-glucosamine 6-phosphate + ADP + H(+). Its pathway is carbohydrate metabolism; hexose metabolism. It functions in the pathway carbohydrate degradation; glycolysis; D-glyceraldehyde 3-phosphate and glycerone phosphate from D-glucose: step 1/4. In terms of biological role, component of the N-acetylglucosamine catabolic cascade that phosphorylates N-acetylglucosamine (GlcNAc), and allows the unique ability to utilise GlcNAc as carbon source. Converts GlcNAc to GlcNAc-6-P. Also able to phosphorylate glucose, glucosamine (GlcN), and mannose. Galactose, fructose, N-acetylmannosamine (ManNAc), mannosamine (ManN), galactosamine (GalN), and N-acetylgalactosamine (GalNAc) are not phosphorylated by HXK1. GlcNAc metabolism is closely associated with virulence and morphogenesis, and is involved in the cell wall synthesis. Acts both as a repressor and an activator of genes involved in maintaining cellular homeostasis. Contributes to white-opaque morphological transition and plays a role as a filamentation repressor. This Candida albicans (strain SC5314 / ATCC MYA-2876) (Yeast) protein is N-acetylglucosamine kinase 1.